We begin with the raw amino-acid sequence, 559 residues long: Endoglin (559 aa).

A signal peptide spans 1–20 (MKSICCVLVLCLLLCRRSTA). The Extracellular portion of the chain corresponds to 21 to 473 (SESICELKDV…SCFEFGLSAV (453 aa)). Cystine bridges form between Cys-25/Cys-201 and Cys-47/Cys-174. Asn-55, Asn-79, Asn-109, Asn-133, Asn-170, Asn-302, and Asn-352 each carry an N-linked (GlcNAc...) asparagine glycan. Cys-381 and Cys-427 form a disulfide bridge. Residues 474–494 (LGIAFGGFLIGVLLTGALWFI) traverse the membrane as a helical segment. Residues 495 to 559 (KIRTGHPVAL…TQSTPTSSMA (65 aa)) lie on the Cytoplasmic side of the membrane. The interval 528–559 (RQPVPTHPSPSENSSANASIGSTQSTPTSSMA) is disordered. Positions 536-546 (SPSENSSANAS) are enriched in low complexity. Polar residues predominate over residues 547–559 (IGSTQSTPTSSMA).

In terms of assembly, homodimer; disulfide-linked.

The protein resides in the cell membrane. In terms of biological role, vascular endothelium glycoprotein that plays an important role in the regulation of angiogenesis. Required for normal structure and integrity of adult vasculature. Important for endothelial cell shape changes in response to blood flow, which drive vascular remodeling and establishment of normal vascular morphology during angiogenesis. The sequence is that of Endoglin from Danio rerio (Zebrafish).